Here is a 374-residue protein sequence, read N- to C-terminus: Peptide chain release factor 2 (374 aa).

At Gln249 the chain carries N5-methylglutamine.

This sequence belongs to the prokaryotic/mitochondrial release factor family. In terms of processing, methylated by PrmC. Methylation increases the termination efficiency of RF2.

The protein localises to the cytoplasm. In terms of biological role, peptide chain release factor 2 directs the termination of translation in response to the peptide chain termination codons UGA and UAA. The chain is Peptide chain release factor 2 from Ruegeria sp. (strain TM1040) (Silicibacter sp.).